We begin with the raw amino-acid sequence, 273 residues long: Diaminopimelate epimerase (273 aa).

Substrate contacts are provided by Asn-11 and Asn-60. Catalysis depends on Cys-69, which acts as the Proton donor. Substrate contacts are provided by residues 70 to 71 (GN), Asn-181, and 199 to 200 (ER). Catalysis depends on Cys-209, which acts as the Proton acceptor. 210–211 (GT) provides a ligand contact to substrate.

It belongs to the diaminopimelate epimerase family. As to quaternary structure, homodimer.

Its subcellular location is the cytoplasm. It carries out the reaction (2S,6S)-2,6-diaminopimelate = meso-2,6-diaminopimelate. Its pathway is amino-acid biosynthesis; L-lysine biosynthesis via DAP pathway; DL-2,6-diaminopimelate from LL-2,6-diaminopimelate: step 1/1. Functionally, catalyzes the stereoinversion of LL-2,6-diaminopimelate (L,L-DAP) to meso-diaminopimelate (meso-DAP), a precursor of L-lysine and an essential component of the bacterial peptidoglycan. The polypeptide is Diaminopimelate epimerase (Helicobacter pylori (strain Shi470)).